The sequence spans 693 residues: TBC1 domain family member 14 (693 aa).

Position 91 is a phosphoserine (Ser-91). Disordered regions lie at residues Pro-108–Phe-130 and Asn-271–Leu-304. Basic and acidic residues predominate over residues Asn-271–Gly-288. Ser-295 is subject to Phosphoserine. One can recognise a Rab-GAP TBC domain in the interval Gly-401–Gly-611.

Interacts with ULK1. May interact with RAB11A and RAB11B, but does not exhibit any GTPase-activating activity toward these proteins. Interacts with TRAPPC8.

It is found in the golgi apparatus. The protein localises to the cis-Golgi network. The protein resides in the trans-Golgi network. Functionally, plays a role in the regulation of starvation-induced autophagosome formation. Together with the TRAPPIII complex, regulates a constitutive trafficking step from peripheral recycling endosomes to the early Golgi, maintaining the cycling pool of ATG9 required for initiation of autophagy. The protein is TBC1 domain family member 14 (TBC1D14) of Homo sapiens (Human).